Consider the following 163-residue polypeptide: Cyclic pyranopterin monophosphate synthase (163 aa).

Residues Met-75–His-77 and Met-115–Glu-116 contribute to the substrate site. The active site involves Asp-130.

The protein belongs to the MoaC family. Homohexamer; trimer of dimers.

It carries out the reaction (8S)-3',8-cyclo-7,8-dihydroguanosine 5'-triphosphate = cyclic pyranopterin phosphate + diphosphate. It functions in the pathway cofactor biosynthesis; molybdopterin biosynthesis. Catalyzes the conversion of (8S)-3',8-cyclo-7,8-dihydroguanosine 5'-triphosphate to cyclic pyranopterin monophosphate (cPMP). This is Cyclic pyranopterin monophosphate synthase from Bacillus pumilus (strain SAFR-032).